The chain runs to 297 residues: tRNA dimethylallyltransferase (297 aa).

Residue 15–22 participates in ATP binding; that stretch reads GPTASGKS. Residue 17-22 participates in substrate binding; sequence TASGKS. Interaction with substrate tRNA regions lie at residues 40-43 and 164-168; these read DSMQ and QRIVR.

The protein belongs to the IPP transferase family. Monomer. The cofactor is Mg(2+).

The enzyme catalyses adenosine(37) in tRNA + dimethylallyl diphosphate = N(6)-dimethylallyladenosine(37) in tRNA + diphosphate. Functionally, catalyzes the transfer of a dimethylallyl group onto the adenine at position 37 in tRNAs that read codons beginning with uridine, leading to the formation of N6-(dimethylallyl)adenosine (i(6)A). This Rhizobium johnstonii (strain DSM 114642 / LMG 32736 / 3841) (Rhizobium leguminosarum bv. viciae) protein is tRNA dimethylallyltransferase.